The following is a 248-amino-acid chain: Anamorsin homolog (248 aa).

The segment at 4–129 (FKGLQKSLYI…ETGSSARLSF (126 aa)) is N-terminal SAM-like domain. A linker region spans residues 130–161 (AKKNASAVNVWKISGDDEELIDEEELLDEEDK). 4 residues coordinate [2Fe-2S] cluster: C172, C181, C184, and C186. Residues 172–186 (CSTTGKRKACKNCSC) are fe-S binding site A. [4Fe-4S] cluster contacts are provided by C209, C212, C220, and C223. 2 short sequence motifs (cx2C motif) span residues 209 to 212 (CGNC) and 220 to 223 (CSTC). A fe-S binding site B region spans residues 209 to 223 (CGNCYLGDAFRCSTC).

This sequence belongs to the anamorsin family. In terms of assembly, monomer. [2Fe-2S] cluster is required as a cofactor. [4Fe-4S] cluster serves as cofactor.

It is found in the cytoplasm. It localises to the mitochondrion intermembrane space. Functionally, component of the cytosolic iron-sulfur (Fe-S) protein assembly (CIA) machinery. Required for the maturation of extramitochondrial Fe-S proteins. Part of an electron transfer chain functioning in an early step of cytosolic Fe-S biogenesis, facilitating the de novo assembly of a [4Fe-4S] cluster on the cytosolic Fe-S scaffold complex. Electrons are transferred from NADPH via a FAD- and FMN-containing diflavin oxidoreductase. Together with the diflavin oxidoreductase, also required for the assembly of the diferric tyrosyl radical cofactor of ribonucleotide reductase (RNR), probably by providing electrons for reduction during radical cofactor maturation in the catalytic small subunit. In Drosophila yakuba (Fruit fly), this protein is Anamorsin homolog.